We begin with the raw amino-acid sequence, 491 residues long: Katanin p60 ATPase-containing subunit A1 (491 aa).

The interval 1–29 (MSLLMISENVKLAREYALLGNYDSAMVYY) is interaction with KATNB1. Residues 1-75 (MSLLMISENV…VKDIMKTLES (75 aa)) form an interaction with dynein and NDEL1 region. The interaction with microtubules stretch occupies residues 1–185 (MSLLMISENV…EPETNKFDST (185 aa)). Phosphoserine; by DYRK2 occurs at positions 42 and 109. The disordered stretch occupies residues 87 to 185 (QHDLPASEGE…EPETNKFDST (99 aa)). Over residues 117–144 (SSQYSDPKSHGNRPSTTVRVHRSSAQNV) the composition is skewed to polar residues. Residue Thr133 is modified to Phosphothreonine; by DYRK2. Residues 145–169 (HNDRGKAVRCREKKEQNKGREEKNK) show a composition bias toward basic and acidic residues. Ser170 carries the phosphoserine modification. 249-256 (GPPGTGKT) contributes to the ATP binding site.

The protein belongs to the AAA ATPase family. Katanin p60 subunit A1 subfamily. As to quaternary structure, can homooligomerize into hexameric rings, which may be promoted by interaction with microtubules. Interacts with KATNB1, which may serve as a targeting subunit. Interacts with ASPM; the katanin complex formation KATNA1:KATNB1 is required for the association of ASPM. Interacts with dynein and NDEL1. Associates with the E3 ligase complex containing DYRK2, EDD/UBR5, DDB1 and DCAF1 proteins (EDVP complex). Interacts with KLHL42 (via the kelch domains). Interacts with CUL3; the interaction is enhanced by KLHL42. Interacts with KATNB1 and KATNBL1. Interacts with CAMSAP2 and CAMSAP3; leading to regulate the length of CAMSAP-decorated microtubule stretches. Post-translationally, phosphorylation by DYRK2 triggers ubiquitination and subsequent degradation. Ubiquitinated by the BCR(KLHL42) E3 ubiquitin ligase complex, leading to its proteasomal degradation. Ubiquitinated by the EDVP E3 ligase complex and subsequently targeted for proteasomal degradation.

Its subcellular location is the cytoplasm. It is found in the midbody. It localises to the cytoskeleton. The protein localises to the microtubule organizing center. The protein resides in the centrosome. Its subcellular location is the spindle pole. It is found in the spindle. It carries out the reaction n ATP + n H2O + a microtubule = n ADP + n phosphate + (n+1) alpha/beta tubulin heterodimers.. ATPase activity is stimulated by microtubules, which promote homooligomerization. ATP-dependent microtubule severing is stimulated by interaction with KATNB1. In terms of biological role, catalytic subunit of a complex which severs microtubules in an ATP-dependent manner. Microtubule severing may promote rapid reorganization of cellular microtubule arrays and the release of microtubules from the centrosome following nucleation. Microtubule release from the mitotic spindle poles may allow depolymerization of the microtubule end proximal to the spindle pole, leading to poleward microtubule flux and poleward motion of chromosome. Microtubule release within the cell body of neurons may be required for their transport into neuronal processes by microtubule-dependent motor proteins. This transport is required for axonal growth. The chain is Katanin p60 ATPase-containing subunit A1 from Homo sapiens (Human).